We begin with the raw amino-acid sequence, 709 residues long: Elongation factor G (709 aa).

Residues Asn10–Glu295 enclose the tr-type G domain. GTP-binding positions include Ala19–Thr26, Asp91–His95, and Asn145–Asp148.

Belongs to the TRAFAC class translation factor GTPase superfamily. Classic translation factor GTPase family. EF-G/EF-2 subfamily.

It is found in the cytoplasm. Functionally, catalyzes the GTP-dependent ribosomal translocation step during translation elongation. During this step, the ribosome changes from the pre-translocational (PRE) to the post-translocational (POST) state as the newly formed A-site-bound peptidyl-tRNA and P-site-bound deacylated tRNA move to the P and E sites, respectively. Catalyzes the coordinated movement of the two tRNA molecules, the mRNA and conformational changes in the ribosome. The sequence is that of Elongation factor G from Bifidobacterium adolescentis (strain ATCC 15703 / DSM 20083 / NCTC 11814 / E194a).